The sequence spans 331 residues: ATPase GET3 (331 aa).

Residue 32–39 participates in ATP binding; the sequence is KGGVGKTT. D61 is a catalytic residue. 2 residues coordinate ATP: E235 and N262. Positions 273 and 276 each coordinate Zn(2+).

Belongs to the arsA ATPase family. As to quaternary structure, homodimer.

The protein localises to the cytoplasm. The protein resides in the endoplasmic reticulum. ATPase required for the post-translational delivery of tail-anchored (TA) proteins to the endoplasmic reticulum. Recognizes and selectively binds the transmembrane domain of TA proteins in the cytosol. This complex then targets to the endoplasmic reticulum by membrane-bound receptors, where the tail-anchored protein is released for insertion. This process is regulated by ATP binding and hydrolysis. ATP binding drives the homodimer towards the closed dimer state, facilitating recognition of newly synthesized TA membrane proteins. ATP hydrolysis is required for insertion. Subsequently, the homodimer reverts towards the open dimer state, lowering its affinity for the membrane-bound receptor, and returning it to the cytosol to initiate a new round of targeting. In Malassezia globosa (strain ATCC MYA-4612 / CBS 7966) (Dandruff-associated fungus), this protein is ATPase GET3.